The primary structure comprises 211 residues: tRNA (guanine-N(7)-)-methyltransferase (211 aa).

S-adenosyl-L-methionine-binding residues include glutamate 43, glutamate 68, asparagine 95, and aspartate 117. Residue aspartate 117 is part of the active site. Substrate is bound by residues lysine 121, aspartate 153, and threonine 190 to glutamate 193.

Belongs to the class I-like SAM-binding methyltransferase superfamily. TrmB family.

The catalysed reaction is guanosine(46) in tRNA + S-adenosyl-L-methionine = N(7)-methylguanosine(46) in tRNA + S-adenosyl-L-homocysteine. It participates in tRNA modification; N(7)-methylguanine-tRNA biosynthesis. Functionally, catalyzes the formation of N(7)-methylguanine at position 46 (m7G46) in tRNA. This is tRNA (guanine-N(7)-)-methyltransferase from Alkaliphilus oremlandii (strain OhILAs) (Clostridium oremlandii (strain OhILAs)).